The sequence spans 63 residues: Beta-defensin 6 (63 aa).

Residues Met1 to Ser22 form the signal peptide. Gln23 carries the post-translational modification Pyrrolidone carboxylic acid. 3 disulfide bridges follow: Cys31-Cys59, Cys38-Cys52, and Cys42-Cys60.

Belongs to the beta-defensin family. As to expression, predominantly expressed in skeletal muscle, also expressed in esophagus, tongue, and trachea. Also expressed in lung when induced by lipopolysaccharide.

The protein localises to the secreted. Has potent antibacterial activity against E.coli (ATCC 25922). In Mus musculus (Mouse), this protein is Beta-defensin 6 (Defb6).